The following is a 429-amino-acid chain: Ribosomal RNA small subunit methyltransferase B (429 aa).

S-adenosyl-L-methionine contacts are provided by residues 254 to 260 (CAAPGGK), aspartate 277, aspartate 303, and aspartate 322. Residue cysteine 375 is the Nucleophile of the active site.

Belongs to the class I-like SAM-binding methyltransferase superfamily. RsmB/NOP family.

The protein resides in the cytoplasm. It catalyses the reaction cytidine(967) in 16S rRNA + S-adenosyl-L-methionine = 5-methylcytidine(967) in 16S rRNA + S-adenosyl-L-homocysteine + H(+). Its function is as follows. Specifically methylates the cytosine at position 967 (m5C967) of 16S rRNA. In Escherichia coli (strain UTI89 / UPEC), this protein is Ribosomal RNA small subunit methyltransferase B.